A 537-amino-acid chain; its full sequence is Tegument protein BRRF2 (537 aa).

2 disordered regions span residues 322-466 and 486-537; these read PRFL…AEEF and GLRV…LSVV. The segment covering 334–347 has biased composition (polar residues); the sequence is EPQQTCSQLTSRGN. Over residues 420–441 the composition is skewed to low complexity; it reads VTGSSQAAPSSSSVTPVASLSG. Residues 492–517 show a composition bias toward acidic residues; sequence DEDEDGSEDGEFSDLDLSDSDHEGDE.

Belongs to the lymphocryptovirus BRRF2 family.

Its subcellular location is the virion tegument. The chain is Tegument protein BRRF2 from Homo sapiens (Human).